We begin with the raw amino-acid sequence, 147 residues long: ATP synthase epsilon chain (147 aa).

The protein belongs to the ATPase epsilon chain family. F-type ATPases have 2 components, CF(1) - the catalytic core - and CF(0) - the membrane proton channel. CF(1) has five subunits: alpha(3), beta(3), gamma(1), delta(1), epsilon(1). CF(0) has three main subunits: a, b and c.

It localises to the cell inner membrane. In terms of biological role, produces ATP from ADP in the presence of a proton gradient across the membrane. The chain is ATP synthase epsilon chain from Protochlamydia amoebophila (strain UWE25).